The primary structure comprises 48 residues: Phospholipase A2 superbin d (48 aa).

Residues Tyr28, Gly30, and Gly32 each coordinate Ca(2+). Residues Cys29 and Cys45 are joined by a disulfide bond. His48 is an active-site residue.

Ca(2+) is required as a cofactor. Expressed by the venom gland.

It localises to the secreted. It catalyses the reaction a 1,2-diacyl-sn-glycero-3-phosphocholine + H2O = a 1-acyl-sn-glycero-3-phosphocholine + a fatty acid + H(+). Functionally, snake venom phospholipase A2 (PLA2) that inhibits collagen-induced platelet aggregation. In terms of inhibition of platelet aggregation, superbin d is less potent as superbin a, b, and c. PLA2 catalyzes the calcium-dependent hydrolysis of the 2-acyl groups in 3-sn-phosphoglycerides. The sequence is that of Phospholipase A2 superbin d from Austrelaps superbus (Lowland copperhead snake).